A 643-amino-acid chain; its full sequence is Sodium/iodide cotransporter (643 aa).

Residues 1 to 14 (MEAVETGERPTFGA) are Extracellular-facing. The helical transmembrane segment at 15 to 31 (WDYGVFALMLLVSTGIG) threads the bilayer. Residues 32–56 (LWVGLARGGQRSAEDFFTGGRRLAA) lie on the Cytoplasmic side of the membrane. A discontinuously helical transmembrane segment spans residues 57–80 (LPVGLSLSASFMSAVQVLGVPSEA). The Na(+) site is built by serine 69, valine 71, and glutamine 72. Valine 76 lines the iodide pocket. Residues 81-84 (YRYG) are Extracellular-facing. Residues 85 to 105 (LKFLWMCLGQLLNSVLTALLF) traverse the membrane as a helical segment. Residue methionine 90 participates in iodide binding. Topologically, residues 106–130 (MPVFYRLGLTSTYEYLEMRFSRAVR) are cytoplasmic. A helical membrane pass occupies residues 131–157 (LCGTLQYIVATMLYTGIVIYAPALILN). A Na(+)-binding site is contributed by tyrosine 144. Residues 158 to 163 (QVTGLD) are Extracellular-facing. A helical transmembrane segment spans residues 164 to 181 (IWASLLSTGIICTFYTAV). At 182-189 (GGMKAVVW) the chain is on the cytoplasmic side. The helical transmembrane segment at 190 to 208 (TDVFQVVVMLSGFWVVLAR) threads the bilayer. At 209 to 243 (GVMLVGGPRQVLTLAQNHSRINLMDFNPDPRSRYT) the chain is on the extracellular side. The discontinuously helical transmembrane segment at 244–266 (FWTFVVGGTLVWLSMYGVNQAQV) threads the bilayer. An iodide-binding site is contributed by tryptophan 255. Na(+) is bound at residue methionine 258. Topologically, residues 267–278 (QRYVACRTEKQA) are cytoplasmic. Residues 279–301 (KLALLINQVGLFLIVSSAACCGI) traverse the membrane as a helical segment. Residues 302–335 (VMFVFYTDCDPLLLGRISAPDQYMPLLVLDIFED) are Extracellular-facing. Residues 336–363 (LPGVPGLFLACAYSGTLSTASTSINAMA) form a helical membrane-spanning segment. Over 364-386 (AVTVEDLIKPRLRSLAPRKLVII) the chain is Cytoplasmic. Residues 387–408 (SKGLSLIYGSACLTVAALSSLL) form a helical membrane-spanning segment. Residues 409–411 (GGG) lie on the Extracellular side of the membrane. A helical transmembrane segment spans residues 412–437 (VLQGSFTVMGVISGPLLGAFILGMFL). Leucine 413 is an iodide binding site. Serine 416 and phenylalanine 417 together coordinate Na(+). Iodide is bound at residue phenylalanine 417. At 438-441 (PACN) the chain is on the cytoplasmic side. A helical transmembrane segment spans residues 442–465 (TPGVLAGLGAGLALSLWVALGATL). Topologically, residues 466–525 (YPPSEQTMRVLPSSAARCVALSVNASGLLDPALLPANDSSRAPSSGMDASRPALADSFYA) are extracellular. N-linked (GlcNAc...) asparagine glycans are attached at residues asparagine 489 and asparagine 502. The chain crosses the membrane as a helical span at residues 526 to 550 (ISYLYYGALGTLTTVLCGALISCLT). Residues 551-643 (GPTKRSTLAP…GGRDQQETNL (93 aa)) are Cytoplasmic-facing. Residue serine 556 is modified to Phosphoserine; by PKA. The interval 623-643 (AGSWTPCVGHDGGRDQQETNL) is disordered. A compositionally biased stretch (basic and acidic residues) spans 633 to 643 (DGGRDQQETNL).

Belongs to the sodium:solute symporter (SSF) (TC 2.A.21) family. Monomer. Glycosylated. As to expression, expression is primarily in thyroid tissue, but also to a lower extent in mammary gland and ovary. Expression is reduced in tumors.

It localises to the cell membrane. It is found in the cytoplasm. It carries out the reaction iodide(out) + 2 Na(+)(out) = iodide(in) + 2 Na(+)(in). The catalysed reaction is chlorate(out) + 2 Na(+)(out) = chlorate(in) + 2 Na(+)(in). It catalyses the reaction thiocyanate(out) + 2 Na(+)(out) = thiocyanate(in) + 2 Na(+)(in). The enzyme catalyses nitrate(out) + 2 Na(+)(out) = nitrate(in) + 2 Na(+)(in). It carries out the reaction selenocyanate(out) + 2 Na(+)(out) = selenocyanate(in) + 2 Na(+)(in). Dysidenin and perchlorate inhibit iodide transport activity. Oxyanions inhibit iodide transport activity by blocking the binding sites for iodide and one of the sodium ions. Sodium:iodide symporter that mediates the transport of iodide into the thyroid gland. Can also mediate the transport of chlorate, thiocynate, nitrate and selenocynate. The protein is Sodium/iodide cotransporter (SLC5A5) of Homo sapiens (Human).